The sequence spans 255 residues: PHD finger protein ALFIN-LIKE 4 (255 aa).

At methionine 1 the chain carries N-acetylmethionine. Positions glycine 145 to threonine 200 are disordered. The segment covering serine 150–lysine 160 has biased composition (low complexity). A compositionally biased stretch (basic and acidic residues) spans arginine 165–proline 178. A compositionally biased stretch (acidic residues) spans lysine 179–glycine 198. The PHD-type zinc finger occupies glutamate 199–lysine 251.

It belongs to the Alfin family. In terms of assembly, interacts with H3K4me3 and to a lesser extent with H3K4me2. As to expression, ubiquitously expressed.

It localises to the nucleus. Histone-binding component that specifically recognizes H3 tails trimethylated on 'Lys-4' (H3K4me3), which mark transcription start sites of virtually all active genes. This is PHD finger protein ALFIN-LIKE 4 (AL4) from Arabidopsis thaliana (Mouse-ear cress).